A 100-amino-acid chain; its full sequence is NAD(P)H-quinone oxidoreductase subunit 4L, chloroplastic (100 aa).

The next 3 membrane-spanning stretches (helical) occupy residues 1-21 (MLEHVLVLSAYLFSVGLYGLI), 31-51 (ICLELIFNAVNINFVTFSDFF), and 60-80 (IFAIFVIAIAAAEAAIGLAIL).

This sequence belongs to the complex I subunit 4L family. In terms of assembly, NDH is composed of at least 16 different subunits, 5 of which are encoded in the nucleus.

The protein localises to the plastid. It is found in the chloroplast thylakoid membrane. The catalysed reaction is a plastoquinone + NADH + (n+1) H(+)(in) = a plastoquinol + NAD(+) + n H(+)(out). It carries out the reaction a plastoquinone + NADPH + (n+1) H(+)(in) = a plastoquinol + NADP(+) + n H(+)(out). Its function is as follows. NDH shuttles electrons from NAD(P)H:plastoquinone, via FMN and iron-sulfur (Fe-S) centers, to quinones in the photosynthetic chain and possibly in a chloroplast respiratory chain. The immediate electron acceptor for the enzyme in this species is believed to be plastoquinone. Couples the redox reaction to proton translocation, and thus conserves the redox energy in a proton gradient. This Trachelium caeruleum (Blue throatwort) protein is NAD(P)H-quinone oxidoreductase subunit 4L, chloroplastic.